An 833-amino-acid polypeptide reads, in one-letter code: Leucine--tRNA ligase (833 aa).

The 'HIGH' region signature appears at proline 41 to histidine 52. A 'KMSKS' region motif is present at residues lysine 610–serine 614. Residue lysine 613 coordinates ATP.

It belongs to the class-I aminoacyl-tRNA synthetase family.

The protein resides in the cytoplasm. It carries out the reaction tRNA(Leu) + L-leucine + ATP = L-leucyl-tRNA(Leu) + AMP + diphosphate. The polypeptide is Leucine--tRNA ligase (Streptococcus pyogenes serotype M28 (strain MGAS6180)).